We begin with the raw amino-acid sequence, 217 residues long: MSAEPRINDRIRVPEVRLVGPSGEQVGIVPLAKALELAQEYDLDLVEVAANARPPVCKLMDYGKFKYESAMKAREARKNQAHTVIKEMKLRPKIDPHDYDTKKGHVVRFLKQGDKVKITIMFRGREQSRPELGYRLLQRLAEDVADLGFVESNPKQDGRNMIMVLGPHKKKTEAMAEARQAQEARKADAKANPGKSQNAAETDDAEAEAPAEAPAEA.

Residues 170 to 217 (KKTEAMAEARQAQEARKADAKANPGKSQNAAETDDAEAEAPAEAPAEA) form a disordered region. Residues 172–189 (TEAMAEARQAQEARKADA) show a composition bias toward basic and acidic residues.

It belongs to the IF-3 family. As to quaternary structure, monomer.

It localises to the cytoplasm. In terms of biological role, IF-3 binds to the 30S ribosomal subunit and shifts the equilibrium between 70S ribosomes and their 50S and 30S subunits in favor of the free subunits, thus enhancing the availability of 30S subunits on which protein synthesis initiation begins. The polypeptide is Translation initiation factor IF-3 (Streptomyces coelicolor (strain ATCC BAA-471 / A3(2) / M145)).